Here is a 145-residue protein sequence, read N- to C-terminus: Hemoglobin subunit beta (145 aa).

Residues 1 to 145 (MLTAEEKAAV…VANALAHRYH (145 aa)) form the Globin domain. Thr-11 carries the post-translational modification Phosphothreonine. Ser-43 carries the post-translational modification Phosphoserine. Lys-58 bears the N6-acetyllysine mark. His-62 provides a ligand contact to heme b. Lys-81 is subject to N6-acetyllysine. His-91 is a heme b binding site. At Cys-92 the chain carries S-nitrosocysteine.

The protein belongs to the globin family. Heterotetramer of two alpha chains and two beta chains. In terms of tissue distribution, red blood cells.

In terms of biological role, involved in oxygen transport from the lung to the various peripheral tissues. This is Hemoglobin subunit beta (HBB) from Tragelaphus strepsiceros (Greater kudu).